The primary structure comprises 100 residues: MARKSLIQRDKKRKKLEQKYHLIRRSSKQEIHKVSLLSEKREFYVKLQSSPRNSAPTRLRRRCFVTGRPRANYRDFELSGHILREMVEACLLPGAIRSSW.

This sequence belongs to the universal ribosomal protein uS14 family. In terms of assembly, part of the 30S ribosomal subunit.

It is found in the plastid. Binds 16S rRNA, required for the assembly of 30S particles. This is Small ribosomal subunit protein uS14c from Cuscuta obtusiflora (Peruvian dodder).